A 501-amino-acid chain; its full sequence is U6 snRNA (guanine-N(2))-methyltransferase THUMPD2 (501 aa).

A THUMP domain is found at 149–264 (TEQIQELQET…DVYSVLGIPV (116 aa)). The segment at 414 to 469 (LKGGEASSGPLNSQGGHTEEPGGEERLTPAEKAAVSEPVSSPFAASNQGRLDRMPP) is disordered. Residues 430–442 (HTEEPGGEERLTP) show a composition bias toward basic and acidic residues.

Belongs to the methyltransferase superfamily. In terms of assembly, part of the heterodimeric THUMPD2-TRM112 methyltransferase complex; this complex forms an active tRNA methyltransferase, where TRMT112 acts as an activator of the catalytic subunit THUMPD2.

Its subcellular location is the nucleus. The catalysed reaction is guanosine in U6 snRNA + S-adenosyl-L-methionine = N(2)-methylguanosine in U6 snRNA + S-adenosyl-L-homocysteine + H(+). Its function is as follows. Catalytic subunit of the THUMPD2-TRM112 methyltransferase complex, that specifically mediates the S-adenosyl-L-methionine-dependent N(2)-methylation of guanosine nucleotides, most probably at position 72 (m2G72), in the U6snRNA of the major spliceosome. This modification in the U6 snRNA affects the constitutive splicing efficiency of introns that have suboptimal splice sites and can impact final mRNA levels. The protein is U6 snRNA (guanine-N(2))-methyltransferase THUMPD2 of Bos taurus (Bovine).